Consider the following 428-residue polypeptide: Enolase (428 aa).

Glutamine 163 contacts (2R)-2-phosphoglycerate. Glutamate 205 serves as the catalytic Proton donor. Mg(2+) contacts are provided by aspartate 242, glutamate 286, and aspartate 313. The (2R)-2-phosphoglycerate site is built by lysine 338, arginine 367, serine 368, and lysine 389. The active-site Proton acceptor is lysine 338.

This sequence belongs to the enolase family. Mg(2+) is required as a cofactor.

The protein resides in the cytoplasm. It localises to the secreted. The protein localises to the cell surface. It catalyses the reaction (2R)-2-phosphoglycerate = phosphoenolpyruvate + H2O. Its pathway is carbohydrate degradation; glycolysis; pyruvate from D-glyceraldehyde 3-phosphate: step 4/5. In terms of biological role, catalyzes the reversible conversion of 2-phosphoglycerate (2-PG) into phosphoenolpyruvate (PEP). It is essential for the degradation of carbohydrates via glycolysis. The sequence is that of Enolase from Acidovorax sp. (strain JS42).